The primary structure comprises 306 residues: Probable L,D-transpeptidase YbiS (306 aa).

An N-terminal signal peptide occupies residues 1 to 24 (MNMKLKTLFAAAFAVVGFCSTASA). Positions 99 to 234 (EGIVINSAEM…VPVGTRVQFI (136 aa)) constitute a L,D-TPase catalytic domain. His194 (proton donor/acceptor) is an active-site residue. Cys210 serves as the catalytic Nucleophile.

The protein belongs to the YkuD family.

The protein localises to the periplasm. Its pathway is cell wall biogenesis; peptidoglycan biosynthesis. Its function is as follows. Responsible, at least in part, for anchoring of the major outer membrane lipoprotein (Lpp) to the peptidoglycan via a meso-diaminopimelyl-L-Lys- bond on the terminal residue of Lpp. In Escherichia coli O6:H1 (strain CFT073 / ATCC 700928 / UPEC), this protein is Probable L,D-transpeptidase YbiS (ybiS).